Reading from the N-terminus, the 418-residue chain is Tyrosine--tRNA ligase 1 (418 aa).

Tyr-34 is a binding site for L-tyrosine. Positions 39-48 match the 'HIGH' region motif; that stretch reads PTADSLHIGH. 2 residues coordinate L-tyrosine: Tyr-169 and Gln-173. The short motif at 230-234 is the 'KMSKS' region element; it reads KFGKT. Lys-233 serves as a coordination point for ATP. In terms of domain architecture, S4 RNA-binding spans 352-418; sequence TVLIDLLVES…GKKKYFLIRY (67 aa).

Belongs to the class-I aminoacyl-tRNA synthetase family. TyrS type 1 subfamily. As to quaternary structure, homodimer.

The protein localises to the cytoplasm. It carries out the reaction tRNA(Tyr) + L-tyrosine + ATP = L-tyrosyl-tRNA(Tyr) + AMP + diphosphate + H(+). Its function is as follows. Catalyzes the attachment of tyrosine to tRNA(Tyr) in a two-step reaction: tyrosine is first activated by ATP to form Tyr-AMP and then transferred to the acceptor end of tRNA(Tyr). The polypeptide is Tyrosine--tRNA ligase 1 (Bacillus anthracis).